Reading from the N-terminus, the 532-residue chain is Intercellular adhesion molecule 1 (532 aa).

An N-terminal signal peptide occupies residues 1 to 27; sequence MAPSSPRPALPALLVLLGALFPGPGNA. At 28 to 480 the chain is on the extracellular side; it reads QTSVSPPKVI…TVNVLSPRYE (453 aa). Ig-like C2-type domains are found at residues 41–103 and 128–193; these read GGSV…QSTA and GKDL…LDLR. Disulfide bonds link Cys-48–Cys-92, Cys-52–Cys-96, and Cys-135–Cys-186. Asn-145 carries N-linked (GlcNAc...) asparagine glycosylation. The Cell attachment site; atypical signature appears at 152–154; the sequence is RGE. 4 N-linked (GlcNAc...) asparagine glycosylation sites follow: Asn-183, Asn-202, Asn-267, and Asn-296. Ig-like C2-type domains follow at residues 230–297 and 325–378; these read DTQG…LGNQ and GTEV…LEVA. Cys-237 and Cys-290 are joined by a disulfide. A disulfide bond links Cys-332 and Cys-371. Residues Asn-385 and Asn-406 are each glycosylated (N-linked (GlcNAc...) asparagine). 3 cysteine pairs are disulfide-bonded: Cys-403–Cys-419, Cys-419–Cys-457, and Cys-431–Cys-457. One can recognise an Ig-like C2-type 5 domain in the interval 412–464; it reads NSQQTPMCQASGNPLPELKCLKDGTFPLPVGESVTVTRDLEGTYLCRARSTQG. The helical transmembrane segment at 481–503 threads the bilayer; that stretch reads IVIITVVAAAVIMGTAGLSTYLY. The Cytoplasmic segment spans residues 504 to 532; the sequence is NRQRKIRKYRLQQAQKGTPMKPNTQATPP. Thr-521 and Thr-530 each carry phosphothreonine.

Belongs to the immunoglobulin superfamily. ICAM family. In terms of assembly, homodimer. Interacts with MUC1 and promotes cell aggregation in epithelial cells. Interacts with ARHGEF26/SGEF. Interacts (on T cell side) with CD81, CD247 and CD9 at immunological synapses between antigen-presenting cells and T cells. In terms of processing, monoubiquitinated, which is promoted by MARCH9 and leads to endocytosis.

It is found in the membrane. Functionally, ICAM proteins are ligands for the leukocyte adhesion protein LFA-1 (integrin alpha-L/beta-2). During leukocyte trans-endothelial migration, ICAM1 engagement promotes the assembly of endothelial apical cups through ARHGEF26/SGEF and RHOG activation. The polypeptide is Intercellular adhesion molecule 1 (ICAM1) (Pan paniscus (Pygmy chimpanzee)).